The chain runs to 290 residues: Glycine--tRNA ligase alpha subunit (290 aa).

Belongs to the class-II aminoacyl-tRNA synthetase family. In terms of assembly, tetramer of two alpha and two beta subunits.

Its subcellular location is the cytoplasm. The catalysed reaction is tRNA(Gly) + glycine + ATP = glycyl-tRNA(Gly) + AMP + diphosphate. This chain is Glycine--tRNA ligase alpha subunit, found in Zymomonas mobilis subsp. mobilis (strain ATCC 31821 / ZM4 / CP4).